The chain runs to 121 residues: Large ribosomal subunit protein bL20 (121 aa).

The protein belongs to the bacterial ribosomal protein bL20 family.

In terms of biological role, binds directly to 23S ribosomal RNA and is necessary for the in vitro assembly process of the 50S ribosomal subunit. It is not involved in the protein synthesizing functions of that subunit. The sequence is that of Large ribosomal subunit protein bL20 from Moorella thermoacetica (strain ATCC 39073 / JCM 9320).